A 105-amino-acid chain; its full sequence is Small ribosomal subunit protein uS17 (105 aa).

The protein belongs to the universal ribosomal protein uS17 family. As to quaternary structure, part of the 30S ribosomal subunit. Contacts protein S12.

In terms of biological role, one of the primary rRNA binding proteins, it binds directly to 16S rRNA where it helps nucleate assembly of the platform and body of the 30S subunit by bringing together and stabilizing interactions between several different RNA helices. The combined cluster of proteins S8, S12 and S17 appears to hold together the shoulder and platform of the 30S subunit. The polypeptide is Small ribosomal subunit protein uS17 (Thermus thermophilus (strain ATCC 27634 / DSM 579 / HB8)).